Here is a 146-residue protein sequence, read N- to C-terminus: Anti-sigma F factor (146 aa).

This sequence belongs to the anti-sigma-factor family.

The enzyme catalyses L-seryl-[protein] + ATP = O-phospho-L-seryl-[protein] + ADP + H(+). It carries out the reaction L-threonyl-[protein] + ATP = O-phospho-L-threonyl-[protein] + ADP + H(+). Functionally, binds to sigma F and blocks its ability to form an RNA polymerase holoenzyme (E-sigma F). Phosphorylates SpoIIAA on a serine residue. This phosphorylation may enable SpoIIAA to act as an anti-anti-sigma factor that counteracts SpoIIAB and thus releases sigma F from inhibition. This is Anti-sigma F factor from Halalkalibacterium halodurans (strain ATCC BAA-125 / DSM 18197 / FERM 7344 / JCM 9153 / C-125) (Bacillus halodurans).